A 122-amino-acid chain; its full sequence is Large ribosomal subunit protein uL14 (122 aa).

This sequence belongs to the universal ribosomal protein uL14 family. Part of the 50S ribosomal subunit. Forms a cluster with proteins L3 and L19. In the 70S ribosome, L14 and L19 interact and together make contacts with the 16S rRNA in bridges B5 and B8.

Binds to 23S rRNA. Forms part of two intersubunit bridges in the 70S ribosome. The sequence is that of Large ribosomal subunit protein uL14 from Caldicellulosiruptor bescii (strain ATCC BAA-1888 / DSM 6725 / KCTC 15123 / Z-1320) (Anaerocellum thermophilum).